A 214-amino-acid polypeptide reads, in one-letter code: Alkaline phosphatase-like protein (214 aa).

Helical transmembrane passes span 3–23 (EIII…LIMI), 48–68 (LGII…ALIL), 141–161 (FLIL…SLGA), and 177–197 (YSSV…LLFV).

It belongs to the DedA family.

Its subcellular location is the cell membrane. This Lactococcus lactis subsp. cremoris (strain MG1363) protein is Alkaline phosphatase-like protein (apl).